The primary structure comprises 240 residues: MIAFIVLPILAAVLQQSSGSVDFDSESPRKPEIQNKIVDLHNFLRRSVNPTASNMLKMEWYPEAAANAERWAYRCIESHSPRDSRVLGGIKCGENIYMSPVPIKWTEIIHAWHGENKNFKYGIGAVPPNAVTGHFSQVVWYKSYRIGCAAAYCPSSKYSYFYVCQYCPAGNIIGKTATPYKSGPPCGDCPSACDNGLCTNPCTKEDKYTNCKSLVQQAGCQDKQMQSDCPAICFCQNKII.

An N-terminal signal peptide occupies residues 1–19 (MIAFIVLPILAAVLQQSSG). Residues 38-166 (VDLHNFLRRS…KYSYFYVCQY (129 aa)) enclose the SCP domain. 8 cysteine pairs are disulfide-bonded: Cys75/Cys153, Cys92/Cys167, Cys148/Cys164, Cys186/Cys193, Cys189/Cys198, Cys202/Cys235, Cys211/Cys229, and Cys220/Cys233. The 34-residue stretch at 202–235 (CTKEDKYTNCKSLVQQAGCQDKQMQSDCPAICFC) folds into the ShKT domain.

This sequence belongs to the CRISP family. Expressed by the venom gland.

The protein resides in the secreted. Catrin-2 weakly blocks contraction of smooth muscle elicited by high potassium-induced depolarization, but does not block caffeine-stimulated contraction. Catrin-1 has no significant effect. May target voltage-gated calcium channels on smooth muscle. The protein is Cysteine-rich venom protein catrin of Crotalus atrox (Western diamondback rattlesnake).